The primary structure comprises 263 residues: Inactive adenylate kinase (263 aa).

The protein belongs to the adenylate kinase family.

It is found in the cytoplasm. Functionally, lacks adenylate kinase activity. This is Inactive adenylate kinase from Plasmodium falciparum (isolate 3D7).